The following is a 327-amino-acid chain: GMP reductase (327 aa).

Catalysis depends on Cys-176, which acts as the Thioimidate intermediate. An NADP(+)-binding site is contributed by 205–228 (IIADGGIRTHGDIAKSIRFGATMV).

This sequence belongs to the IMPDH/GMPR family. GuaC type 2 subfamily.

It carries out the reaction IMP + NH4(+) + NADP(+) = GMP + NADPH + 2 H(+). Functionally, catalyzes the irreversible NADPH-dependent deamination of GMP to IMP. It functions in the conversion of nucleobase, nucleoside and nucleotide derivatives of G to A nucleotides, and in maintaining the intracellular balance of A and G nucleotides. This chain is GMP reductase, found in Streptococcus equi subsp. equi (strain 4047).